Consider the following 418-residue polypeptide: Serine hydroxymethyltransferase (418 aa).

Residues Leu121 and 125–127 contribute to the (6S)-5,6,7,8-tetrahydrofolate site; that span reads GHL. Lys230 is subject to N6-(pyridoxal phosphate)lysine. Residue 355–357 participates in (6S)-5,6,7,8-tetrahydrofolate binding; it reads SPF.

Belongs to the SHMT family. Homodimer. Pyridoxal 5'-phosphate is required as a cofactor.

It localises to the cytoplasm. The enzyme catalyses (6R)-5,10-methylene-5,6,7,8-tetrahydrofolate + glycine + H2O = (6S)-5,6,7,8-tetrahydrofolate + L-serine. It participates in one-carbon metabolism; tetrahydrofolate interconversion. It functions in the pathway amino-acid biosynthesis; glycine biosynthesis; glycine from L-serine: step 1/1. Functionally, catalyzes the reversible interconversion of serine and glycine with tetrahydrofolate (THF) serving as the one-carbon carrier. This reaction serves as the major source of one-carbon groups required for the biosynthesis of purines, thymidylate, methionine, and other important biomolecules. Also exhibits THF-independent aldolase activity toward beta-hydroxyamino acids, producing glycine and aldehydes, via a retro-aldol mechanism. The polypeptide is Serine hydroxymethyltransferase (Streptococcus agalactiae serotype V (strain ATCC BAA-611 / 2603 V/R)).